Reading from the N-terminus, the 211-residue chain is Holliday junction resolvase RecU (211 aa).

Mg(2+)-binding residues include threonine 95, aspartate 97, glutamate 110, and glutamine 129.

It belongs to the RecU family. Mg(2+) serves as cofactor.

The protein localises to the cytoplasm. It catalyses the reaction Endonucleolytic cleavage at a junction such as a reciprocal single-stranded crossover between two homologous DNA duplexes (Holliday junction).. Functionally, endonuclease that resolves Holliday junction intermediates in genetic recombination. Cleaves mobile four-strand junctions by introducing symmetrical nicks in paired strands. Promotes annealing of linear ssDNA with homologous dsDNA. Required for DNA repair, homologous recombination and chromosome segregation. The polypeptide is Holliday junction resolvase RecU (Lactobacillus acidophilus (strain ATCC 700396 / NCK56 / N2 / NCFM)).